Here is a 355-residue protein sequence, read N- to C-terminus: UDP-N-acetylglucosamine--N-acetylmuramyl-(pentapeptide) pyrophosphoryl-undecaprenol N-acetylglucosamine transferase (355 aa).

UDP-N-acetyl-alpha-D-glucosamine is bound by residues 15–17, Asn127, Arg163, Ser191, Ile244, 263–268, and Gln288; these read TGG and ALTVSE.

It belongs to the glycosyltransferase 28 family. MurG subfamily.

The protein localises to the cell inner membrane. The enzyme catalyses di-trans,octa-cis-undecaprenyl diphospho-N-acetyl-alpha-D-muramoyl-L-alanyl-D-glutamyl-meso-2,6-diaminopimeloyl-D-alanyl-D-alanine + UDP-N-acetyl-alpha-D-glucosamine = di-trans,octa-cis-undecaprenyl diphospho-[N-acetyl-alpha-D-glucosaminyl-(1-&gt;4)]-N-acetyl-alpha-D-muramoyl-L-alanyl-D-glutamyl-meso-2,6-diaminopimeloyl-D-alanyl-D-alanine + UDP + H(+). Its pathway is cell wall biogenesis; peptidoglycan biosynthesis. Functionally, cell wall formation. Catalyzes the transfer of a GlcNAc subunit on undecaprenyl-pyrophosphoryl-MurNAc-pentapeptide (lipid intermediate I) to form undecaprenyl-pyrophosphoryl-MurNAc-(pentapeptide)GlcNAc (lipid intermediate II). The sequence is that of UDP-N-acetylglucosamine--N-acetylmuramyl-(pentapeptide) pyrophosphoryl-undecaprenol N-acetylglucosamine transferase from Escherichia coli O157:H7.